The following is a 430-amino-acid chain: tRNA(Ile)-lysidine synthase (430 aa).

27-32 lines the ATP pocket; sequence SGGSDS.

This sequence belongs to the tRNA(Ile)-lysidine synthase family.

It localises to the cytoplasm. The catalysed reaction is cytidine(34) in tRNA(Ile2) + L-lysine + ATP = lysidine(34) in tRNA(Ile2) + AMP + diphosphate + H(+). Ligates lysine onto the cytidine present at position 34 of the AUA codon-specific tRNA(Ile) that contains the anticodon CAU, in an ATP-dependent manner. Cytidine is converted to lysidine, thus changing the amino acid specificity of the tRNA from methionine to isoleucine. The polypeptide is tRNA(Ile)-lysidine synthase (Rickettsia felis (strain ATCC VR-1525 / URRWXCal2) (Rickettsia azadi)).